A 64-amino-acid polypeptide reads, in one-letter code: MPKIIEAIYENGVFKPLQKVDLKEGEKAKIVLESISDKTFGILKASETEIKKVLEEIDDFWGVC.

Belongs to the UPF0165 family.

Possibly the antitoxin component of a type II toxin-antitoxin (TA) system. Its cognate toxin is VapC4 (Potential). The protein is Putative antitoxin VapB4 (vapB4) of Archaeoglobus fulgidus (strain ATCC 49558 / DSM 4304 / JCM 9628 / NBRC 100126 / VC-16).